Reading from the N-terminus, the 126-residue chain is uncharacterized protein (126 aa).

This is an uncharacterized protein from Invertebrate iridescent virus 6 (IIV-6).